The sequence spans 236 residues: Chloride intracellular channel protein 3 (236 aa).

Positions 1–88 (MAETKLQLFV…EDFLEETLGP (88 aa)) are required for insertion into the membrane. Residues 12 to 90 (ASEDGESVGH…FLEETLGPPD (79 aa)) enclose the GST N-terminal domain. The G-site signature appears at 22 to 25 (CPSC). Cys22 and Cys25 are disulfide-bonded. Residues 24-44 (SCQRLFMVLLLKGVPFTLTTV) form a helical membrane-spanning segment. Phosphoserine occurs at positions 49 and 159. The GST C-terminal domain maps to 68 to 235 (DSDAKTDTLQ…LAAYRPAVHP (168 aa)).

Belongs to the chloride channel CLIC family. As to quaternary structure, associated with the C-terminal of MAPK15. As to expression, detected in placenta (at protein level). Widely expressed. High expression is found in placenta followed by lung and heart. Low expression in skeletal muscle, kidney and pancreas.

Its subcellular location is the nucleus. It is found in the membrane. The protein resides in the cell membrane. The protein localises to the cytoplasm. It localises to the secreted. Its subcellular location is the extracellular space. It is found in the extracellular matrix. The enzyme catalyses chloride(in) = chloride(out). Its activity is regulated as follows. Inhibited by rapamycin, amphotericin B and IAA-94. In the soluble state, catalyzes glutaredoxin-like thiol disulfide exchange reactions with reduced glutathione as electron donor. Reduced in a glutathione-dependent way and secreted into the extracellular matrix where it activates TGM2 and promotes blood vessel growth during tissue remodeling as occurs in tumorigenesis. Can reduce specific cysteines in TGM2 and regulate cofactor binding. Can insert into membranes and form outwardly rectifying chloride ion channels. May participate in cellular growth control. The sequence is that of Chloride intracellular channel protein 3 from Homo sapiens (Human).